The chain runs to 129 residues: Ribosome-binding factor A (129 aa).

This sequence belongs to the RbfA family. In terms of assembly, monomer. Binds 30S ribosomal subunits, but not 50S ribosomal subunits or 70S ribosomes.

The protein resides in the cytoplasm. In terms of biological role, one of several proteins that assist in the late maturation steps of the functional core of the 30S ribosomal subunit. Associates with free 30S ribosomal subunits (but not with 30S subunits that are part of 70S ribosomes or polysomes). Required for efficient processing of 16S rRNA. May interact with the 5'-terminal helix region of 16S rRNA. The protein is Ribosome-binding factor A of Thioalkalivibrio sulfidiphilus (strain HL-EbGR7).